A 124-amino-acid polypeptide reads, in one-letter code: Small ribosomal subunit protein uS12 (124 aa).

Asp-89 is modified (3-methylthioaspartic acid). The segment at 104 to 124 (LQGVKDRKQSRSKYGAKRPKK) is disordered. Positions 113 to 124 (SRSKYGAKRPKK) are enriched in basic residues.

This sequence belongs to the universal ribosomal protein uS12 family. Part of the 30S ribosomal subunit. Contacts proteins S8 and S17. May interact with IF1 in the 30S initiation complex.

Its function is as follows. With S4 and S5 plays an important role in translational accuracy. Interacts with and stabilizes bases of the 16S rRNA that are involved in tRNA selection in the A site and with the mRNA backbone. Located at the interface of the 30S and 50S subunits, it traverses the body of the 30S subunit contacting proteins on the other side and probably holding the rRNA structure together. The combined cluster of proteins S8, S12 and S17 appears to hold together the shoulder and platform of the 30S subunit. This chain is Small ribosomal subunit protein uS12, found in Thiomonas delicata (Thiomonas cuprina).